The chain runs to 269 residues: Shikimate dehydrogenase (NADP(+)) (269 aa).

Residues 17-19 and Thr64 each bind shikimate; that span reads SKS. The active-site Proton acceptor is Lys68. Glu80 lines the NADP(+) pocket. Shikimate is bound by residues Asn89 and Asp105. Residues 130-134, 154-159, and Met213 contribute to the NADP(+) site; these read GAGGA and NRTHAK. Tyr215 provides a ligand contact to shikimate. Gly237 contributes to the NADP(+) binding site.

Belongs to the shikimate dehydrogenase family. As to quaternary structure, homodimer.

The enzyme catalyses shikimate + NADP(+) = 3-dehydroshikimate + NADPH + H(+). It functions in the pathway metabolic intermediate biosynthesis; chorismate biosynthesis; chorismate from D-erythrose 4-phosphate and phosphoenolpyruvate: step 4/7. Involved in the biosynthesis of the chorismate, which leads to the biosynthesis of aromatic amino acids. Catalyzes the reversible NADPH linked reduction of 3-dehydroshikimate (DHSA) to yield shikimate (SA). The polypeptide is Shikimate dehydrogenase (NADP(+)) (Neisseria cinerea).